Consider the following 474-residue polypeptide: Sugar transporter ERD6-like 17 (474 aa).

12 consecutive transmembrane segments (helical) span residues 27–47 (ITACVILSTFVAVCGSFSFGV), 76–96 (FATLGAAIGALFCGNLAMVIG), 106–126 (FLCITGWLSIAFAKEVVLLNF), 129–149 (IISGIGFGLTSYVVPVYIAEI), 159–180 (TFSNQLLQNAGLAMIYFCGNFI), 184–204 (TLALLGALPCFIQVIGLFFVP), 266–286 (TLVVGIGLMLIQQFSGSAAVI), 302–322 (IGTTMLGIFVIPKAMIGLILV), 329–349 (PLLMTSAFGMSMTCMLLGVAF), 363–383 (ILSFICVMMYIATYAIGLGGL), 403–423 (IVTLVSFSSSSIVTYAFNFLF), and 429–449 (GTFFIFAGIGGAALLFIWLLV).

Belongs to the major facilitator superfamily. Sugar transporter (TC 2.A.1.1) family. As to expression, expressed in young seedlings.

Its subcellular location is the membrane. Its function is as follows. Sugar transporter. The protein is Sugar transporter ERD6-like 17 of Arabidopsis thaliana (Mouse-ear cress).